The chain runs to 545 residues: Tetrahydrocannabinolic acid synthase (545 aa).

The signal sequence occupies residues 1 to 28 (MNCSAFSFWFVCKIIFFFLSFHIQISIA). C37 and C99 form a disulfide bridge. N-linked (GlcNAc...) asparagine glycosylation is found at N65 and N89. Positions 77–251 (TTPKPLVIVT…AAWKIKLVAV (175 aa)) constitute an FAD-binding PCMH-type domain. FAD contacts are provided by residues 109–115 (TRSGGHD) and S120. Residues 114–176 (HDAEGMSYIS…ENLSFPGGYC (63 aa)) constitute a cross-link (6-(S-cysteinyl)-8alpha-(pros-histidyl)-FAD (His-Cys)). N168 is a glycosylation site (N-linked (GlcNAc...) asparagine). FAD contacts are provided by residues C176, 180–184 (GVGGH), Y190, E236, and I241. H292 is a cannabigerolate binding site. N-linked (GlcNAc...) asparagine glycosylation is found at N297, N305, and N329. Residues Y417 and E442 each contribute to the cannabigerolate site. N467 carries an N-linked (GlcNAc...) asparagine glycan. 481–483 (YLN) is a binding site for FAD. The active-site Proton acceptor is Y484. N-linked (GlcNAc...) asparagine glycosylation is present at N499.

It belongs to the oxygen-dependent FAD-linked oxidoreductase family. Monomer. FAD serves as cofactor. Post-translationally, glycosylated when produced in a heterologous system. The deglycosylated THCA synthase has more catalytic activity than the glycosylated form. The FAD cofactor is bound via a bicovalent 6-S-cysteinyl, 8alpha-N1-histidyl FAD linkage. As to expression, expressed in the secretory cells of glandular trichomes.

The protein localises to the secreted. Its subcellular location is the extracellular space. The protein resides in the apoplast. It catalyses the reaction cannabigerolate + O2 = Delta(9)-tetrahydrocannabinolate + H2O2. It functions in the pathway secondary metabolite biosynthesis; terpenoid biosynthesis. Inhibited by Hg(2+). Functionally, oxidoreductase involved in the biosynthesis of cannabinoids-related terpenophenolic natural products, which have pharmacological activity. Catalyzes the oxidative cyclization of the monoterpene moiety in cannabigerolic acid (CBGA), producing delta(9)-tetrahydrocannabinolate (THCA), the major cannabioid in drug-type Cannabis plants. Can also use cannabinerolic acid as substrate, but not cannabigerol or cannabinerol. This Cannabis sativa (Hemp) protein is Tetrahydrocannabinolic acid synthase.